Here is a 358-residue protein sequence, read N- to C-terminus: Trace amine-associated receptor 7b (358 aa).

Residues methionine 1–arginine 47 lie on the Extracellular side of the membrane. Residues asparagine 5 and asparagine 34 are each glycosylated (N-linked (GlcNAc...) asparagine). 2 cysteine pairs are disulfide-bonded: cysteine 37–cysteine 201 and cysteine 120–cysteine 205. The helical transmembrane segment at leucine 48 to valine 68 threads the bilayer. The Cytoplasmic portion of the chain corresponds to methionine 69–asparagine 83. Residues phenylalanine 84–serine 104 traverse the membrane as a helical segment. At threonine 105–lysine 121 the chain is on the extracellular side. Residues leucine 122–valine 143 traverse the membrane as a helical segment. The Cytoplasmic segment spans residues aspartate 144 to lysine 166. A helical membrane pass occupies residues cysteine 167–alanine 187. At asparagine 188 to serine 212 the chain is on the extracellular side. A glycan (N-linked (GlcNAc...) asparagine) is linked at asparagine 210. Residues tryptophan 213 to serine 233 traverse the membrane as a helical segment. The Cytoplasmic segment spans residues lysine 234–threonine 274. The chain crosses the membrane as a helical span at residues leucine 275 to isoleucine 295. Over aspartate 296–glutamate 309 the chain is Extracellular. Residues isoleucine 310–phenylalanine 333 traverse the membrane as a helical segment. Over arginine 334 to glutamate 358 the chain is Cytoplasmic.

This sequence belongs to the G-protein coupled receptor 1 family. In terms of tissue distribution, specifically expressed in neurons of the olfactory epithelium.

It is found in the cell membrane. Its function is as follows. Olfactory receptor specific for N,N-dimethylalkylamines trace amines, such as N,N-dimethylcyclohexylamine. Trace amine compounds are enriched in animal body fluids and act on trace amine-associated receptors (TAARs) to elicit both intraspecific and interspecific innate behaviors. Ligand-binding causes a conformation change that triggers signaling via G(s)-class of G alpha proteins (GNAL or GNAS). The protein is Trace amine-associated receptor 7b of Mus musculus (Mouse).